We begin with the raw amino-acid sequence, 103 residues long: NADH dehydrogenase [ubiquinone] 1 beta subcomplex subunit 7 (103 aa).

The CHCH domain occupies 27-69; the sequence is RDMCAHLLIPLNKCRQAEFYLPWKCEDERHVYEKCEYELVMER. 2 short sequence motifs (cx9C motif) span residues 30 to 40 and 51 to 61; these read CAHLLIPLNKC and CEDERHVYEKC. 2 disulfide bridges follow: cysteine 30-cysteine 61 and cysteine 40-cysteine 51.

The protein belongs to the complex I NDUFB7 subunit family. Complex I is composed of at least 49 different subunits.

The protein resides in the mitochondrion. It localises to the mitochondrion inner membrane. The protein localises to the mitochondrion intermembrane space. Accessory subunit of the mitochondrial membrane respiratory chain NADH dehydrogenase (Complex I), that is believed not to be involved in catalysis. Complex I functions in the transfer of electrons from NADH to the respiratory chain. The immediate electron acceptor for the enzyme is believed to be ubiquinone. This is NADH dehydrogenase [ubiquinone] 1 beta subcomplex subunit 7 from Arabidopsis thaliana (Mouse-ear cress).